A 221-amino-acid chain; its full sequence is 2-amino-5-formylamino-6-ribosylaminopyrimidin-4(3H)-one 5'-monophosphate deformylase (221 aa).

Residues Glu-29, His-31, Asp-40, and His-108 each coordinate Fe cation.

Belongs to the creatininase superfamily. FAPy deformylase family. As to quaternary structure, homodimer. Requires Fe(2+) as cofactor. Zn(2+) serves as cofactor.

It catalyses the reaction 2-amino-5-formylamino-6-(5-phospho-D-ribosylamino)pyrimidin-4(3H)-one + H2O = 2,5-diamino-6-(1-D-ribosylamino)pyrimidin-4(3H)-one 5'-phosphate + formate + H(+). The protein operates within cofactor biosynthesis; coenzyme F420 biosynthesis. Its pathway is cofactor biosynthesis; riboflavin biosynthesis. Catalyzes the hydrolysis of the formamide of 2-amino-5-formylamino-6-ribosylamino-4(3H)-pyrimidinone 5'-monophosphate (FAPy) to form 2,5-diamino-6-ribosylamino-4(3H)-pyrimidinone 5'-phosphate (APy). This chain is 2-amino-5-formylamino-6-ribosylaminopyrimidin-4(3H)-one 5'-monophosphate deformylase, found in Methanococcus maripaludis (strain C7 / ATCC BAA-1331).